Here is a 600-residue protein sequence, read N- to C-terminus: Transcription factor efl-3 (600 aa).

A disordered region spans residues 35-65 (LPEPRVNRTTDPDHENLLPSPVPRPSPAMSQ). Residues 39-50 (RVNRTTDPDHEN) are compositionally biased toward basic and acidic residues. 2 consecutive DNA-binding regions follow at residues 95–164 (RKEK…QWQG) and 253–343 (RDRQ…VYCG).

This sequence belongs to the E2F/DP family.

It is found in the nucleus. In terms of biological role, probable transcription factor which represses gene expression in a subset of ventral nerve cord neurons. Involved in regulating programmed cell death and determining cell fate during development, acting in a partially redundant manner with lin-39 to repress the BH3 domain-encoding gene egl-1 in the VA and VB motor neurons. The protein is Transcription factor efl-3 of Caenorhabditis elegans.